Reading from the N-terminus, the 398-residue chain is Succinate--CoA ligase [ADP-forming] subunit beta (398 aa).

Residues 9 to 254 (KALLHEFGVP…ETEEDAKEIE (246 aa)) enclose the ATP-grasp domain. Residues Lys-46, 53–55 (GRG), Glu-109, Ser-112, and Glu-117 contribute to the ATP site. Mg(2+)-binding residues include Asn-209 and Asp-223. Substrate-binding positions include Asn-274 and 331–333 (GIM).

The protein belongs to the succinate/malate CoA ligase beta subunit family. As to quaternary structure, heterotetramer of two alpha and two beta subunits. Requires Mg(2+) as cofactor.

The catalysed reaction is succinate + ATP + CoA = succinyl-CoA + ADP + phosphate. It carries out the reaction GTP + succinate + CoA = succinyl-CoA + GDP + phosphate. It participates in carbohydrate metabolism; tricarboxylic acid cycle; succinate from succinyl-CoA (ligase route): step 1/1. In terms of biological role, succinyl-CoA synthetase functions in the citric acid cycle (TCA), coupling the hydrolysis of succinyl-CoA to the synthesis of either ATP or GTP and thus represents the only step of substrate-level phosphorylation in the TCA. The beta subunit provides nucleotide specificity of the enzyme and binds the substrate succinate, while the binding sites for coenzyme A and phosphate are found in the alpha subunit. This Bradyrhizobium sp. (strain BTAi1 / ATCC BAA-1182) protein is Succinate--CoA ligase [ADP-forming] subunit beta.